Reading from the N-terminus, the 578-residue chain is Adhesion G protein-coupled receptor A1 (578 aa).

The Extracellular segment spans residues 1–22 (MTQWDLKTVLSLPQYPGEFLHP). Residues 23–43 (VVYACTAVMLLCLLASVITYI) form a helical membrane-spanning segment. Residues 44–56 (LHQSAIRISRKGR) lie on the Cytoplasmic side of the membrane. The chain crosses the membrane as a helical span at residues 57–77 (HALLNFCFHAALTFTVFAGGI). At 78 to 87 (NRTQHPILCQ) the chain is on the extracellular side. Residues 88-108 (AVGIALHYSTLSTMLWIGVTA) traverse the membrane as a helical segment. The Cytoplasmic segment spans residues 109-137 (RNIYKQVTKKALPCPGADQPPYPKQPLLR). Residues 138 to 158 (FYLISGGVPFIICGVTAATNI) form a helical membrane-spanning segment. Residues 159-178 (RNYGTEDEDVAYCWMAWEPS) lie on the Extracellular side of the membrane. A helical transmembrane segment spans residues 179-199 (LGAFYGPAAFIALVTCVYFLC). Over 200–262 (TYVQLRRHPE…NEHSFKAQLR (63 aa)) the chain is Cytoplasmic. The disordered stretch occupies residues 216-236 (ERTEEQQRLAVPESGHRHGVR). A helical transmembrane segment spans residues 263 to 283 (AAAFTLFLFTATWTFGALAVS). Residues 284-289 (QGHFLD) lie on the Extracellular side of the membrane. The chain crosses the membrane as a helical span at residues 290 to 310 (MIFSCLYGAFCVTLGLFVLIH). Disordered regions lie at residues 463-486 (PSSL…EGPM) and 537-578 (SLPF…ETTV). Over residues 469-481 (SPHSSRSESPTSS) the composition is skewed to low complexity. The span at 537–548 (SLPFGGPSQNGL) shows a compositional bias: polar residues.

The protein belongs to the G-protein coupled receptor 2 family. Adhesion G-protein coupled receptor (ADGR) subfamily. As to expression, predominantly expressed in CNS.

It localises to the membrane. This is Adhesion G protein-coupled receptor A1 from Mus musculus (Mouse).